A 662-amino-acid chain; its full sequence is Zinc finger protein 17 (662 aa).

Positions 8–101 (MVFEDVAIHF…LLKDILHLAE (94 aa)) constitute a KRAB domain. 16 consecutive C2H2-type zinc fingers follow at residues 190-212 (YSCTQCGKDFCHQHTLFEHQKIH), 218-240 (YECSECGKLFRYNSDLIKHQRNH), 246-268 (YKCSECGKAFSLKYNVVQHQKIH), 274-296 (YECSECGKAFLRKSHLLQHQRIH), 302-324 (YVCSECGKAFLTQAHLVGHQKIH), 358-380 (FYCCECGKFFMDSCTLIIHQRVH), 386-408 (YECNECGKFFRYRSTLIRHQKVH), 414-436 (YECSECGKFFMDTSTLIIHQRVH), 442-464 (YECNKCGKFFRYCFTLNRHQRVH), 470-492 (YECSECGKFFVDSCTLKSHQRVH), 498-520 (FECSICGKSFRCRSTLDTHQRIH), 526-548 (YECSECGKFFRHNSNHIRHRRNH), 554-576 (FECTECGRVFSQNSHLIRHQKVH), 582-604 (YKCSKCGKFFMDSSTLISHERVH), 610-632 (YECSECGKVFRYNSSLIKHRRIH), and 638-660 (YQCSECGRVFNQNSHLIQHQKVH).

The protein belongs to the krueppel C2H2-type zinc-finger protein family.

The protein localises to the nucleus. May be involved in transcriptional regulation. The chain is Zinc finger protein 17 (ZNF17) from Homo sapiens (Human).